Consider the following 428-residue polypeptide: D-amino acid dehydrogenase (428 aa).

Residue valine 3–tyrosine 17 participates in FAD binding.

Belongs to the DadA oxidoreductase family. The cofactor is FAD.

The enzyme catalyses a D-alpha-amino acid + A + H2O = a 2-oxocarboxylate + AH2 + NH4(+). It participates in amino-acid degradation; D-alanine degradation; NH(3) and pyruvate from D-alanine: step 1/1. Functionally, oxidative deamination of D-amino acids. The chain is D-amino acid dehydrogenase from Burkholderia pseudomallei (strain K96243).